The primary structure comprises 271 residues: uncharacterized protein (271 aa).

It belongs to the anhydro-N-acetylmuramic acid kinase family.

This is an uncharacterized protein from Yersinia enterocolitica.